The chain runs to 146 residues: Acidic phospholipase A2 S5-32M (146 aa).

The first 19 residues, 1–19 (MYPAHLLVLLAVCVSLLGA), serve as a signal peptide directing secretion. A propeptide spanning residues 20 to 27 (ASIPPQPL) is cleaved from the precursor. 7 cysteine pairs are disulfide-bonded: Cys-38-Cys-98, Cys-54-Cys-145, Cys-56-Cys-72, Cys-71-Cys-126, Cys-78-Cys-119, Cys-87-Cys-112, and Cys-105-Cys-117. Residues Tyr-55, Gly-57, and Gly-59 each coordinate Ca(2+). Residue His-75 is part of the active site. Asp-76 lines the Ca(2+) pocket. Asp-120 is an active-site residue.

It belongs to the phospholipase A2 family. Group I subfamily. D49 sub-subfamily. Ca(2+) serves as cofactor. Expressed by the venom gland.

The protein localises to the secreted. The enzyme catalyses a 1,2-diacyl-sn-glycero-3-phosphocholine + H2O = a 1-acyl-sn-glycero-3-phosphocholine + a fatty acid + H(+). Functionally, snake venom phospholipase A2 (PLA2) that inhibits collagen-induced platelet aggregation. PLA2 catalyzes the calcium-dependent hydrolysis of the 2-acyl groups in 3-sn-phosphoglycerides. The chain is Acidic phospholipase A2 S5-32M from Austrelaps superbus (Lowland copperhead snake).